We begin with the raw amino-acid sequence, 78 residues long: Small ribosomal subunit protein bS18A (78 aa).

It belongs to the bacterial ribosomal protein bS18 family. As to quaternary structure, part of the 30S ribosomal subunit. Forms a tight heterodimer with protein bS6.

Functionally, binds as a heterodimer with protein bS6 to the central domain of the 16S rRNA, where it helps stabilize the platform of the 30S subunit. The chain is Small ribosomal subunit protein bS18A from Streptomyces avermitilis (strain ATCC 31267 / DSM 46492 / JCM 5070 / NBRC 14893 / NCIMB 12804 / NRRL 8165 / MA-4680).